Here is a 231-residue protein sequence, read N- to C-terminus: Heptaprenylglyceryl phosphate synthase (231 aa).

Sn-glycerol 1-phosphate is bound at residue Lys-12. 2 residues coordinate Mg(2+): Asp-14 and Thr-40. Sn-glycerol 1-phosphate-binding positions include 159–164 (YLEYSG), Gly-189, and 209–210 (GN).

This sequence belongs to the GGGP/HepGP synthase family. Group I subfamily. As to quaternary structure, homodimer. Mg(2+) serves as cofactor.

The enzyme catalyses sn-glycerol 1-phosphate + all-trans-heptaprenyl diphosphate = 3-heptaprenyl-sn-glycero-1-phosphate + diphosphate. The protein operates within membrane lipid metabolism; glycerophospholipid metabolism. In terms of biological role, prenyltransferase that catalyzes in vivo the transfer of the heptaprenyl moiety of heptaprenyl pyrophosphate (HepPP; 35 carbon atoms) to the C3 hydroxyl of sn-glycerol-1-phosphate (G1P), producing heptaprenylglyceryl phosphate (HepGP). This reaction is an ether-bond-formation step in the biosynthesis of archaea-type G1P-based membrane lipids found in Bacillales. In Staphylococcus haemolyticus (strain JCSC1435), this protein is Heptaprenylglyceryl phosphate synthase.